Consider the following 394-residue polypeptide: Obg-like ATPase 1 (394 aa).

The 258-residue stretch at 25-282 (LKIGIVGLPN…MAPDEAAKYC (258 aa)) folds into the OBG-type G domain. Residues 34 to 39 (NVGKST), 56 to 60 (FCTIE), and 94 to 97 (DIAG) each bind ATP. Positions 38 and 58 each coordinate Mg(2+). Position 129 (F129) interacts with GTP. Residues 230–231 (NL), L231, and 263–265 (SGV) each bind ATP. 263–265 (SGV) is a GTP binding site. A TGS domain is found at 303-386 (NLIYFFTAGP…QDGDIIFFKF (84 aa)).

The protein belongs to the TRAFAC class OBG-HflX-like GTPase superfamily. OBG GTPase family. YchF/OLA1 subfamily. Monomer (Potential). Interacts with CAR4/GAP1. Mg(2+) is required as a cofactor.

The protein resides in the cytoplasm. It is found in the cytosol. Its activity is regulated as follows. Activated by GAP1. Hydrolyzes ATP, and can also hydrolyze GTP with lower efficiency. Has lower affinity for GTP (Potential). Exhibits GTPase activity. Confers sensitivity to salinity stress by suppressing the anti-oxidation enzymatic activities and increasing lipid peroxidation thus leading to the accumulation of reactive oxygen species (ROS). Acts as a negative regulator of disease resistance against bacterial pathogen. The protein is Obg-like ATPase 1 of Arabidopsis thaliana (Mouse-ear cress).